A 585-amino-acid polypeptide reads, in one-letter code: YTH domain-containing family protein 3 (585 aa).

Disordered regions lie at residues 1–52 (MSAT…YPPM), 243–277 (RKPAKPQPKLKPKGNVGIGGSAVPPPPIKHNMNIG), and 304–351 (PQPL…QQLQ). Ser2 is subject to N-acetylserine. A compositionally biased stretch (polar residues) spans 15–24 (NKVSVQNGSI). Ser23 is subject to Phosphoserine. Basic residues predominate over residues 244 to 254 (KPAKPQPKLKP). Over residues 329–351 (QQQQGPQPQAQPHQVQPQQQQLQ) the composition is skewed to low complexity. The 135-residue stretch at 416 to 550 (GRVFIIKSYS…EKAKQVLKII (135 aa)) folds into the YTH domain. Residues 422 to 424 (KSY), Asp428, 438 to 439 (WC), Asn468, Trp492, and Trp497 each bind RNA.

It belongs to the YTHDF family. YTHDF3 subfamily. Interacts with CNOT1; promoting recruitment of the CCR4-NOT complex. Interacts with YTHDF1. Interacts with YTHDF2. Interacts with PAN3. In terms of processing, (Microbial infection) Proteolytically cleaved by HIV-1 protease when incorporated into HIV-1 particles in a nucleocapsid-dependent-manner. Cleavage by HIV-1 protease probably ensures optimal infectivity of the mature virion.

It is found in the cytoplasm. The protein localises to the cytosol. The protein resides in the P-body. It localises to the stress granule. In terms of biological role, specifically recognizes and binds N6-methyladenosine (m6A)-containing RNAs, and regulates their stability. M6A is a modification present at internal sites of mRNAs and some non-coding RNAs and plays a role in mRNA stability and processing. Acts as a regulator of mRNA stability by promoting degradation of m6A-containing mRNAs via interaction with the CCR4-NOT complex or PAN3. The YTHDF paralogs (YTHDF1, YTHDF2 and YTHDF3) share m6A-containing mRNAs targets and act redundantly to mediate mRNA degradation and cellular differentiation. Acts as a negative regulator of type I interferon response by down-regulating interferon-stimulated genes (ISGs) expression: acts by binding to FOXO3 mRNAs. Binds to FOXO3 mRNAs independently of METTL3-mediated m6A modification. Can also act as a regulator of mRNA stability in cooperation with YTHDF2 by binding to m6A-containing mRNA and promoting their degradation. Recognizes and binds m6A-containing circular RNAs (circRNAs); circRNAs are generated through back-splicing of pre-mRNAs, a non-canonical splicing process promoted by dsRNA structures across circularizing exons. Promotes formation of phase-separated membraneless compartments, such as P-bodies or stress granules, by undergoing liquid-liquid phase separation upon binding to mRNAs containing multiple m6A-modified residues: polymethylated mRNAs act as a multivalent scaffold for the binding of YTHDF proteins, juxtaposing their disordered regions and thereby leading to phase separation. The resulting mRNA-YTHDF complexes then partition into different endogenous phase-separated membraneless compartments, such as P-bodies, stress granules or neuronal RNA granules. May also recognize and bind N1-methyladenosine (m1A)-containing mRNAs: inhibits trophoblast invasion by binding to m1A-methylated transcripts of IGF1R, promoting their degradation. Its function is as follows. Has some antiviral activity against HIV-1 virus: incorporated into HIV-1 particles in a nucleocapsid-dependent manner and reduces viral infectivity in the next cycle of infection. May interfere with this early step of the viral life cycle by binding to N6-methyladenosine (m6A) modified sites on the HIV-1 RNA genome. This is YTH domain-containing family protein 3 from Homo sapiens (Human).